Reading from the N-terminus, the 94-residue chain is MGSELETAMETLINVFHAHSGKEGDKYKLSKKELKDLLQTELSSFLDVQKDADAVDKIMKELDENGDGEVDFQEFVVLVAALTVACNNFFWENS.

2 consecutive EF-hand domains span residues 13 to 48 and 50 to 85; these read INVFHAHSGKEGDKYKLSKKELKDLLQTELSSFLDV and KDADAVDKIMKELDENGDGEVDFQEFVVLVAALTVA. The Ca(2+) site is built by K28, E33, D63, N65, D67, E69, and E74. C86 bears the S-nitrosocysteine mark.

The protein belongs to the S-100 family. Dimer of either two alpha chains, or two beta chains, or one alpha and one beta chain. Also forms heterodimers with S100P. Interacts with AGER. Interacts with CAPZA1. Interacts with FKBP4. Interacts with RYR1 and RYR2. Interacts with CACYBP in a calcium-dependent manner. Interacts with PPP5C (via TPR repeats); the interaction is calcium-dependent and modulates PPP5C activity. Interacts with ATP2A2 and PLN in a Ca(2+)-dependent manner. Interacts with mitochondrial F1-ATPase subunits ATP5F1A and ATP5F1B; these interactions increase F1-ATPase activity. Post-translationally, glutathionylated; glutathionylation increases affinity to calcium about 10-fold. In terms of tissue distribution, although predominant among the water-soluble brain proteins, S100 is also found in a variety of other tissues.

The protein localises to the cytoplasm. Its subcellular location is the sarcoplasmic reticulum. The protein resides in the mitochondrion. Functionally, small calcium binding protein that plays important roles in several biological processes such as Ca(2+) homeostasis, chondrocyte biology and cardiomyocyte regulation. In response to an increase in intracellular Ca(2+) levels, binds calcium which triggers conformational changes. These changes allow interactions with specific target proteins and modulate their activity. Regulates a network in cardiomyocytes controlling sarcoplasmic reticulum Ca(2+) cycling and mitochondrial function through interaction with the ryanodine receptors RYR1 and RYR2, sarcoplasmic reticulum Ca(2+)-ATPase/ATP2A2 and mitochondrial F1-ATPase. Facilitates diastolic Ca(2+) dissociation and myofilament mechanics in order to improve relaxation during diastole. This is Protein S100-A1 (S100a1) from Rattus norvegicus (Rat).